The chain runs to 876 residues: ATPase WRNIP1 (876 aa).

2 stretches are compositionally biased toward low complexity: residues 56–85 (NKSN…TPTK) and 104–175 (NNNN…INNN). Residues 56 to 175 (NKSNGNNSIN…NNNNNNINNN (120 aa)) form a disordered region. 240-246 (PGCGKTT) is an ATP binding site. 3 disordered regions span residues 621-647 (KDRQ…PQQQ), 714-737 (INNK…LNPT), and 833-876 (ETKA…SLDF). Low complexity-rich tracts occupy residues 626–647 (SQDQ…PQQQ) and 714–731 (INNK…VNNS). Positions 835–849 (KAISSTDTKESVSIN) are enriched in polar residues. The segment covering 850-863 (DSDKDLTTTHKNEQ) has biased composition (basic and acidic residues).

This sequence belongs to the AAA ATPase family. RarA/MGS1/WRNIP1 subfamily.

The protein localises to the nucleus. The catalysed reaction is ATP + H2O = ADP + phosphate + H(+). In terms of biological role, functions as a modulator for initiation or reinitiation events during DNA polymerase delta-mediated DNA synthesis. Has an intrinsic ATPase activity that functions as a sensor of DNA damage or of arrested replication forks and regulates the extent of DNA synthesis. The chain is ATPase WRNIP1 from Dictyostelium discoideum (Social amoeba).